A 232-amino-acid chain; its full sequence is Large ribosomal subunit protein uL1 (232 aa).

The protein belongs to the universal ribosomal protein uL1 family. In terms of assembly, part of the 50S ribosomal subunit.

Functionally, binds directly to 23S rRNA. The L1 stalk is quite mobile in the ribosome, and is involved in E site tRNA release. In terms of biological role, protein L1 is also a translational repressor protein, it controls the translation of the L11 operon by binding to its mRNA. In Xylella fastidiosa (strain M23), this protein is Large ribosomal subunit protein uL1.